Here is a 321-residue protein sequence, read N- to C-terminus: Endochitinase 33 (321 aa).

A signal peptide spans 1 to 19; sequence MPSLTALASLLALVPSALA. Residues 27–321 form the GH18 domain; it reads QNIAVYWGQN…FETQVVNALR (295 aa). Glu167 serves as the catalytic Proton donor.

The protein belongs to the glycosyl hydrolase 18 family. Chitinase class III subfamily. Monomer.

It localises to the secreted. It carries out the reaction Random endo-hydrolysis of N-acetyl-beta-D-glucosaminide (1-&gt;4)-beta-linkages in chitin and chitodextrins.. Functionally, secreted chitinase involved in the degradation of chitin, a component of the cell walls of fungi and exoskeletal elements of some animals (including worms and arthropods). Plays a morphogenetic role during apical growth, cell division and differentiation (cell wall morphogenesis). May be involved in the degradation and further assimilation of phytopathogenic fungi, namely mycoparasitism, the major mechanism accounting for the antagonistic activity against phytopathogenic fungi displayed by Trichoderma. The chain is Endochitinase 33 (chit33) from Trichoderma harzianum (Hypocrea lixii).